The following is a 338-amino-acid chain: RNA 3'-terminal phosphate cyclase (338 aa).

ATP contacts are provided by residues Gln103 and 283 to 287; that span reads YLADQ. The active-site Tele-AMP-histidine intermediate is the His308.

The protein belongs to the RNA 3'-terminal cyclase family. Type 1 subfamily.

The protein resides in the cytoplasm. It catalyses the reaction a 3'-end 3'-phospho-ribonucleotide-RNA + ATP = a 3'-end 2',3'-cyclophospho-ribonucleotide-RNA + AMP + diphosphate. Catalyzes the conversion of 3'-phosphate to a 2',3'-cyclic phosphodiester at the end of RNA. The mechanism of action of the enzyme occurs in 3 steps: (A) adenylation of the enzyme by ATP; (B) transfer of adenylate to an RNA-N3'P to produce RNA-N3'PP5'A; (C) and attack of the adjacent 2'-hydroxyl on the 3'-phosphorus in the diester linkage to produce the cyclic end product. The biological role of this enzyme is unknown but it is likely to function in some aspects of cellular RNA processing. This Escherichia coli (strain K12 / MC4100 / BW2952) protein is RNA 3'-terminal phosphate cyclase.